The sequence spans 118 residues: Cell division topological specificity factor (118 aa).

Residues 86–118 (RSQAKAVSSQENGASSQEAVSSQESVSTPGAME) are disordered. Residues 99–112 (ASSQEAVSSQESVS) show a composition bias toward low complexity.

It belongs to the MinE family.

Functionally, prevents the cell division inhibition by proteins MinC and MinD at internal division sites while permitting inhibition at polar sites. This ensures cell division at the proper site by restricting the formation of a division septum at the midpoint of the long axis of the cell. The protein is Cell division topological specificity factor of Prochlorococcus marinus (strain MIT 9313).